The following is a 220-amino-acid chain: Probable chemoreceptor glutamine deamidase CheD 2 (220 aa).

The protein belongs to the CheD family.

The catalysed reaction is L-glutaminyl-[protein] + H2O = L-glutamyl-[protein] + NH4(+). In terms of biological role, probably deamidates glutamine residues to glutamate on methyl-accepting chemotaxis receptors (MCPs), playing an important role in chemotaxis. This chain is Probable chemoreceptor glutamine deamidase CheD 2, found in Methanosarcina acetivorans (strain ATCC 35395 / DSM 2834 / JCM 12185 / C2A).